We begin with the raw amino-acid sequence, 345 residues long: S-adenosylmethionine:tRNA ribosyltransferase-isomerase (345 aa).

The protein belongs to the QueA family. As to quaternary structure, monomer.

It is found in the cytoplasm. It carries out the reaction 7-aminomethyl-7-carbaguanosine(34) in tRNA + S-adenosyl-L-methionine = epoxyqueuosine(34) in tRNA + adenine + L-methionine + 2 H(+). It participates in tRNA modification; tRNA-queuosine biosynthesis. Functionally, transfers and isomerizes the ribose moiety from AdoMet to the 7-aminomethyl group of 7-deazaguanine (preQ1-tRNA) to give epoxyqueuosine (oQ-tRNA). The polypeptide is S-adenosylmethionine:tRNA ribosyltransferase-isomerase (Helicobacter pylori (strain Shi470)).